We begin with the raw amino-acid sequence, 172 residues long: Secretory-abundant heat soluble protein 64681 (172 aa).

The N-terminal stretch at 1-19 is a signal peptide; it reads MSRTIVALILLGLAALAAA. The segment at 30–59 is SAHS-c1; sequence EWAGKAWLGKWVSTDRSENWDAFVEALGLP. The SAHS-c2 stretch occupies residues 74–102; that stretch reads WKEGDHYHHQIIIADKSYKQDIQFKLGEE. 2 N-linked (GlcNAc...) asparagine glycosylation sites follow: N108 and N133. The SAHS-c3 stretch occupies residues 115-164; sequence KYTEVGDNLQNEVKIPSKNKTISDSYVVKGDELEKTYKINDVVAKRWYKK.

The protein belongs to the Secretory-abundant heat soluble protein (SAHS) family.

Its subcellular location is the secreted. Secreted heat soluble protein acting as a molecular shield in water-deficient condition. Tardigrade-specific intrinsically disordered proteins (TDPs) are essential for desiccation tolerance by forming non-crystalline amorphous solids upon desiccation, and this vitrified state mirrors their protective capabilities. The polypeptide is Secretory-abundant heat soluble protein 64681 (Hypsibius exemplaris (Freshwater tardigrade)).